A 460-amino-acid chain; its full sequence is Bifunctional protein GlmU (460 aa).

Positions 1–235 are pyrophosphorylase; that stretch reads MALSAAIVLA…PLTVEGVNDR (235 aa). Residues 9–12, Lys23, Gln76, and 81–82 each bind UDP-N-acetyl-alpha-D-glucosamine; these read LAAG and GT. Asp109 contacts Mg(2+). Gly146, Glu161, Asn176, and Asn233 together coordinate UDP-N-acetyl-alpha-D-glucosamine. Position 233 (Asn233) interacts with Mg(2+). Positions 236–256 are linker; sequence VQLAALSKTYNRRVCERWMRN. The segment at 257–460 is N-acetyltransferase; it reads GVTILDPETT…VEGWKPAWER (204 aa). The UDP-N-acetyl-alpha-D-glucosamine site is built by Arg338 and Lys356. His368 functions as the Proton acceptor in the catalytic mechanism. 2 residues coordinate UDP-N-acetyl-alpha-D-glucosamine: Tyr371 and Asn382. Acetyl-CoA contacts are provided by residues 391–392 and Ala428; that span reads NY.

This sequence in the N-terminal section; belongs to the N-acetylglucosamine-1-phosphate uridyltransferase family. The protein in the C-terminal section; belongs to the transferase hexapeptide repeat family. Homotrimer. The cofactor is Mg(2+).

The protein resides in the cytoplasm. The catalysed reaction is alpha-D-glucosamine 1-phosphate + acetyl-CoA = N-acetyl-alpha-D-glucosamine 1-phosphate + CoA + H(+). The enzyme catalyses N-acetyl-alpha-D-glucosamine 1-phosphate + UTP + H(+) = UDP-N-acetyl-alpha-D-glucosamine + diphosphate. It participates in nucleotide-sugar biosynthesis; UDP-N-acetyl-alpha-D-glucosamine biosynthesis; N-acetyl-alpha-D-glucosamine 1-phosphate from alpha-D-glucosamine 6-phosphate (route II): step 2/2. It functions in the pathway nucleotide-sugar biosynthesis; UDP-N-acetyl-alpha-D-glucosamine biosynthesis; UDP-N-acetyl-alpha-D-glucosamine from N-acetyl-alpha-D-glucosamine 1-phosphate: step 1/1. Its pathway is bacterial outer membrane biogenesis; LPS lipid A biosynthesis. Its function is as follows. Catalyzes the last two sequential reactions in the de novo biosynthetic pathway for UDP-N-acetylglucosamine (UDP-GlcNAc). The C-terminal domain catalyzes the transfer of acetyl group from acetyl coenzyme A to glucosamine-1-phosphate (GlcN-1-P) to produce N-acetylglucosamine-1-phosphate (GlcNAc-1-P), which is converted into UDP-GlcNAc by the transfer of uridine 5-monophosphate (from uridine 5-triphosphate), a reaction catalyzed by the N-terminal domain. This chain is Bifunctional protein GlmU, found in Bifidobacterium longum subsp. infantis (strain ATCC 15697 / DSM 20088 / JCM 1222 / NCTC 11817 / S12).